The chain runs to 264 residues: Thiazole synthase (264 aa).

Lys-106 serves as the catalytic Schiff-base intermediate with DXP. Residues Gly-167, 193–194 (AG), and 215–216 (NS) contribute to the 1-deoxy-D-xylulose 5-phosphate site.

The protein belongs to the ThiG family. As to quaternary structure, homotetramer. Forms heterodimers with either ThiH or ThiS.

Its subcellular location is the cytoplasm. The enzyme catalyses [ThiS sulfur-carrier protein]-C-terminal-Gly-aminoethanethioate + 2-iminoacetate + 1-deoxy-D-xylulose 5-phosphate = [ThiS sulfur-carrier protein]-C-terminal Gly-Gly + 2-[(2R,5Z)-2-carboxy-4-methylthiazol-5(2H)-ylidene]ethyl phosphate + 2 H2O + H(+). It functions in the pathway cofactor biosynthesis; thiamine diphosphate biosynthesis. Functionally, catalyzes the rearrangement of 1-deoxy-D-xylulose 5-phosphate (DXP) to produce the thiazole phosphate moiety of thiamine. Sulfur is provided by the thiocarboxylate moiety of the carrier protein ThiS. In vitro, sulfur can be provided by H(2)S. This Prochlorococcus marinus (strain AS9601) protein is Thiazole synthase.